Here is a 271-residue protein sequence, read N- to C-terminus: Zinc-finger homeodomain protein 8 (271 aa).

Phosphoserine is present on S16. The ZF-HD dimerization-type; degenerate zinc finger occupies 56–107; the sequence is YKECLKNHAAGIGGHALDGCGEFMPSPSFNSNDPASLTCAACGCHRNFHRRE. The segment at 125-154 is disordered; it reads HNRHQLPPPPPPHLAGIRSPDDDDSASPPP. A DNA-binding region (homeobox) is located at residues 179-242; the sequence is RKRFRTKFSQ…NNKISGRSGA (64 aa).

As to quaternary structure, homo- and heterodimer with other ZFHD proteins. Interacts with MIF1, MIF2 and MIF3; these interactions prevent nuclear localization and DNA-binding to inhibit transcription regulation activity. Binds to ZHD1, ZHD2, ZHD4, ZHD10 and ZHD11. Interacts with HIPP30. Mostly expressed in flowers and inflorescence.

Its subcellular location is the nucleus. Functionally, putative transcription factor. The polypeptide is Zinc-finger homeodomain protein 8 (ZHD8) (Arabidopsis thaliana (Mouse-ear cress)).